Here is a 251-residue protein sequence, read N- to C-terminus: Phosphoribosylaminoimidazole-succinocarboxamide synthase (251 aa).

It belongs to the SAICAR synthetase family.

The enzyme catalyses 5-amino-1-(5-phospho-D-ribosyl)imidazole-4-carboxylate + L-aspartate + ATP = (2S)-2-[5-amino-1-(5-phospho-beta-D-ribosyl)imidazole-4-carboxamido]succinate + ADP + phosphate + 2 H(+). It functions in the pathway purine metabolism; IMP biosynthesis via de novo pathway; 5-amino-1-(5-phospho-D-ribosyl)imidazole-4-carboxamide from 5-amino-1-(5-phospho-D-ribosyl)imidazole-4-carboxylate: step 1/2. This chain is Phosphoribosylaminoimidazole-succinocarboxamide synthase, found in Ruegeria pomeroyi (strain ATCC 700808 / DSM 15171 / DSS-3) (Silicibacter pomeroyi).